A 1026-amino-acid chain; its full sequence is Beta-galactosidase (1026 aa).

Glu458 serves as the catalytic Proton donor. Glu546 serves as the catalytic Nucleophile.

It belongs to the glycosyl hydrolase 2 family.

It catalyses the reaction Hydrolysis of terminal non-reducing beta-D-galactose residues in beta-D-galactosides.. The sequence is that of Beta-galactosidase (lacZ) from Streptococcus thermophilus.